The primary structure comprises 270 residues: Undecaprenyl-diphosphatase (270 aa).

8 helical membrane-spanning segments follow: residues 14 to 34 (GLTE…PTFL), 40 to 60 (GITF…LYFW), 88 to 108 (FYII…ETTI), 117 to 137 (SLIA…DTSG), 146 to 166 (ITLK…IPGV), 189 to 209 (FSFL…LSGL), 221 to 241 (PLLI…AFLL), and 249 to 269 (LYPF…FINF).

Belongs to the UppP family.

The protein localises to the cell inner membrane. The enzyme catalyses di-trans,octa-cis-undecaprenyl diphosphate + H2O = di-trans,octa-cis-undecaprenyl phosphate + phosphate + H(+). Its function is as follows. Catalyzes the dephosphorylation of undecaprenyl diphosphate (UPP). Confers resistance to bacitracin. This chain is Undecaprenyl-diphosphatase, found in Geotalea daltonii (strain DSM 22248 / JCM 15807 / FRC-32) (Geobacter daltonii).